The sequence spans 166 residues: Large ribosomal subunit protein uL10 (166 aa).

It belongs to the universal ribosomal protein uL10 family. As to quaternary structure, part of the ribosomal stalk of the 50S ribosomal subunit. The N-terminus interacts with L11 and the large rRNA to form the base of the stalk. The C-terminus forms an elongated spine to which L12 dimers bind in a sequential fashion forming a multimeric L10(L12)X complex.

Functionally, forms part of the ribosomal stalk, playing a central role in the interaction of the ribosome with GTP-bound translation factors. In Streptococcus agalactiae serotype III (strain NEM316), this protein is Large ribosomal subunit protein uL10.